A 374-amino-acid polypeptide reads, in one-letter code: Biotin synthase (374 aa).

The region spanning 49–276 (NEVQVSTLLS…KSHVRLSAGR (228 aa)) is the Radical SAM core domain. Residues Cys64, Cys68, and Cys71 each coordinate [4Fe-4S] cluster. [2Fe-2S] cluster contacts are provided by Cys108, Cys139, Cys199, and Arg271. The tract at residues 344–374 (QQQEQAEGSNDLFIDATKPKVAAKQQHATEA) is disordered.

This sequence belongs to the radical SAM superfamily. Biotin synthase family. As to quaternary structure, homodimer. It depends on [4Fe-4S] cluster as a cofactor. Requires [2Fe-2S] cluster as cofactor.

The enzyme catalyses (4R,5S)-dethiobiotin + (sulfur carrier)-SH + 2 reduced [2Fe-2S]-[ferredoxin] + 2 S-adenosyl-L-methionine = (sulfur carrier)-H + biotin + 2 5'-deoxyadenosine + 2 L-methionine + 2 oxidized [2Fe-2S]-[ferredoxin]. It functions in the pathway cofactor biosynthesis; biotin biosynthesis; biotin from 7,8-diaminononanoate: step 2/2. Catalyzes the conversion of dethiobiotin (DTB) to biotin by the insertion of a sulfur atom into dethiobiotin via a radical-based mechanism. The protein is Biotin synthase of Alteromonas mediterranea (strain DSM 17117 / CIP 110805 / LMG 28347 / Deep ecotype).